Reading from the N-terminus, the 345-residue chain is S-adenosylmethionine:tRNA ribosyltransferase-isomerase (345 aa).

The protein belongs to the QueA family. In terms of assembly, monomer.

It localises to the cytoplasm. It catalyses the reaction 7-aminomethyl-7-carbaguanosine(34) in tRNA + S-adenosyl-L-methionine = epoxyqueuosine(34) in tRNA + adenine + L-methionine + 2 H(+). Its pathway is tRNA modification; tRNA-queuosine biosynthesis. Its function is as follows. Transfers and isomerizes the ribose moiety from AdoMet to the 7-aminomethyl group of 7-deazaguanine (preQ1-tRNA) to give epoxyqueuosine (oQ-tRNA). This chain is S-adenosylmethionine:tRNA ribosyltransferase-isomerase, found in Helicobacter pylori (strain P12).